Here is a 467-residue protein sequence, read N- to C-terminus: Asparagine--tRNA ligase (467 aa).

It belongs to the class-II aminoacyl-tRNA synthetase family. In terms of assembly, homodimer.

The protein resides in the cytoplasm. The enzyme catalyses tRNA(Asn) + L-asparagine + ATP = L-asparaginyl-tRNA(Asn) + AMP + diphosphate + H(+). The polypeptide is Asparagine--tRNA ligase (Haemophilus influenzae (strain PittGG)).